Here is a 190-residue protein sequence, read N- to C-terminus: NADH dehydrogenase [ubiquinone] iron-sulfur protein 3 (190 aa).

The protein belongs to the complex I 30 kDa subunit family. As to quaternary structure, complex I is composed of at least 49 different subunits. This is a component of the iron-sulfur (IP) fragment of the enzyme.

The protein resides in the mitochondrion inner membrane. It catalyses the reaction a ubiquinone + NADH + 5 H(+)(in) = a ubiquinol + NAD(+) + 4 H(+)(out). Functionally, core subunit of the mitochondrial membrane respiratory chain NADH dehydrogenase (Complex I) that is believed to belong to the minimal assembly required for catalysis. Complex I functions in the transfer of electrons from NADH to the respiratory chain. The immediate electron acceptor for the enzyme is believed to be ubiquinone. In Arabidopsis thaliana (Mouse-ear cress), this protein is NADH dehydrogenase [ubiquinone] iron-sulfur protein 3 (NAD9).